The following is a 178-amino-acid chain: ATP synthase subunit delta (178 aa).

It belongs to the ATPase delta chain family. As to quaternary structure, F-type ATPases have 2 components, F(1) - the catalytic core - and F(0) - the membrane proton channel. F(1) has five subunits: alpha(3), beta(3), gamma(1), delta(1), epsilon(1). F(0) has three main subunits: a(1), b(2) and c(10-14). The alpha and beta chains form an alternating ring which encloses part of the gamma chain. F(1) is attached to F(0) by a central stalk formed by the gamma and epsilon chains, while a peripheral stalk is formed by the delta and b chains.

The protein resides in the cell membrane. F(1)F(0) ATP synthase produces ATP from ADP in the presence of a proton or sodium gradient. F-type ATPases consist of two structural domains, F(1) containing the extramembraneous catalytic core and F(0) containing the membrane proton channel, linked together by a central stalk and a peripheral stalk. During catalysis, ATP synthesis in the catalytic domain of F(1) is coupled via a rotary mechanism of the central stalk subunits to proton translocation. In terms of biological role, this protein is part of the stalk that links CF(0) to CF(1). It either transmits conformational changes from CF(0) to CF(1) or is implicated in proton conduction. This is ATP synthase subunit delta from Streptococcus equi subsp. zooepidemicus (strain H70).